The following is a 1426-amino-acid chain: Nephrocystin-4 (1426 aa).

S142 carries the post-translational modification Phosphoserine. Disordered regions lie at residues G450–Q536 and R896–G935. Pro residues predominate over residues K474–V486. Polar residues predominate over residues S503 to Q536. Positions L823 to Q1426 are sufficient for basal bodies localization.

It belongs to the NPHP4 family. In terms of assembly, interacts with NPHP1. Interacts with NPHP1 and RPGRIP1L/NPHP8; NPHP1, NPHP4 and RPGRIP1L are proposed to form a functional NPHP1-4-8 module localized to cell-cell contacts and the ciliary transition zone; NPHP4 mediates the interaction between NPHP1 and RPGRIP1L. Interacts with IQCB1/NPHP5; the interaction likely requires additional interactors. Interacts with RPGRIP1, CEP164, JADE1, PALS1, INADL, PARD6A, INVS, DVL2, LATS1. Interacts with INTU; INTU mediates the interaction between NPHP4 and DAAM1. Interacts with SPATA7. In terms of tissue distribution, expressed in kidney, skeletal muscle, heart and liver, and to a lesser extent in brain and lung.

The protein localises to the cytoplasm. It localises to the cytoskeleton. The protein resides in the cilium basal body. Its subcellular location is the microtubule organizing center. It is found in the centrosome. The protein localises to the cell junction. It localises to the tight junction. The protein resides in the nucleus. Functionally, involved in the organization of apical junctions; the function is proposed to implicate a NPHP1-4-8 module. Does not seem to be strictly required for ciliogenesis. Required for building functional cilia. Involved in the organization of the subapical actin network in multiciliated epithelial cells. Seems to recruit INT to basal bodies of motile cilia which subsequently interacts with actin-modifying proteins such as DAAM1. In cooperation with INVS may down-regulate the canonical Wnt pathway and promote the Wnt-PCP pathway by regulating expression and subcellular location of disheveled proteins. Stabilizes protein levels of JADE1 and promotes its translocation to the nucleus leading to cooperative inhibition of canonical Wnt signaling. Acts as a negative regulator of the hippo pathway by association with LATS1 and modifying LATS1-dependent phosphorylation and localization of WWTR1/TAZ. In Homo sapiens (Human), this protein is Nephrocystin-4 (NPHP4).